Here is a 529-residue protein sequence, read N- to C-terminus: Neuronal acetylcholine receptor subunit alpha-2 (529 aa).

The first 26 residues, 1-26 (MGPSCPVFLSFTKLSLWWLLLTPAGG), serve as a signal peptide directing secretion. Positions 27 to 56 (EEAKRPPPRAPGDPLSSPSPTALPQGGSHT) are disordered. Over 27–264 (EEAKRPPPRA…VTYAFVIRRL (238 aa)) the chain is Extracellular. Asparagine 79 and asparagine 129 each carry an N-linked (GlcNAc...) asparagine glycan. Cysteine 183 and cysteine 197 are oxidised to a cystine. An N-linked (GlcNAc...) asparagine glycan is attached at asparagine 235. Cysteine 247 and cysteine 248 form a disulfide bridge. The next 3 helical transmembrane spans lie at 265 to 289 (PLFY…VFYL), 297 to 315 (ITLC…LLIT), and 331 to 352 (YLLF…VLNV). At 353-502 (HHRSPSTHTM…WKYVAMVIDR (150 aa)) the chain is on the cytoplasmic side. A helical membrane pass occupies residues 503–521 (IFLWLFIIVCFLGTIGLFL).

Belongs to the ligand-gated ion channel (TC 1.A.9) family. Acetylcholine receptor (TC 1.A.9.1) subfamily. Alpha-2/CHRNA2 sub-subfamily. As to quaternary structure, neuronal AChR is composed of two different types of subunits: alpha and non-alpha (beta). CHRNA2/alpha-2 subunit can be combined to CHRNB2/beta-2 or CHRNB4/beta-4 to give rise to functional receptors. Both CHRNA2:CHRNB2 and CHRNA2:CHRNB4 nAChR complexes are heteropentamers with two subtypes: LS (low agonist sensitivity) with a (CHRNA2)3:(CHRNB2/4)2 and HS (high agonist sensitivity) with a (CHRNA2)2:(CHRNB2/4)3 stoichiometries; the subtypes differ in their subunit binding interfaces which are involved in ligand binding.

The protein resides in the synaptic cell membrane. It is found in the cell membrane. It carries out the reaction Ca(2+)(in) = Ca(2+)(out). The enzyme catalyses K(+)(in) = K(+)(out). It catalyses the reaction Na(+)(in) = Na(+)(out). Its function is as follows. Component of neuronal acetylcholine receptors (nAChRs) that function as pentameric, ligand-gated cation channels with high calcium permeability among other activities. nAChRs are excitatory neurotrasnmitter receptors formed by a collection of nAChR subunits known to mediate synaptic transmission in the nervous system and the neuromuscular junction. Each nAchR subunit confers differential attributes to channel properties, including activation, deactivation and desensitization kinetics, pH sensitivity, cation permeability, and binding to allosteric modulators. CHRNA2 forms heteropentameric neuronal acetylcholine receptors with CHRNB2 and CHRNB4 and plays a role in nicotine dependence. The polypeptide is Neuronal acetylcholine receptor subunit alpha-2 (Homo sapiens (Human)).